The following is a 428-amino-acid chain: Probable G-protein coupled receptor (428 aa).

The Extracellular portion of the chain corresponds to 1–46 (MMADKTSPMITSDHSISNFSTGLFGPHPTVPPDVGVVTSSQSQMKD). Residue Asn-18 is glycosylated (N-linked (GlcNAc...) asparagine). The helical transmembrane segment at 47-67 (LFGLFCMVTLNLIALLANTGV) threads the bilayer. The Cytoplasmic portion of the chain corresponds to 68-93 (MVAIARAPHLKKFAFVCHLCAVDVLC). A helical transmembrane segment spans residues 94–114 (AILLMPLGIISSSPFFGTVVF). Residues 115 to 120 (TILECQ) are Extracellular-facing. Residues 121–141 (VYIFLNVFLIWLSILTITAIS) traverse the membrane as a helical segment. Over 142–162 (VERYFYIVHPMRYEVKMTINL) the chain is Cytoplasmic. Residues 163–183 (VIGVMLLIWFKSLLLALVTLF) traverse the membrane as a helical segment. At 184–210 (GWPPYGHQSSIAASHCSLHASHSRLRG) the chain is on the extracellular side. The helical transmembrane segment at 211–231 (VFAVLFCVICFLAPVVVIFSV) threads the bilayer. Over 232 to 293 (YSAVYKVARS…PERAFSGGKA (62 aa)) the chain is Cytoplasmic. A helical transmembrane segment spans residues 294 to 314 (ALTLAFIVGQFLVCWLPFFIF). The Extracellular portion of the chain corresponds to 315–428 (HLQMSLTGSM…IPGQIPEEQA (114 aa)). Over residues 398–414 (SETHPSFANSNPRNMEN) the composition is skewed to polar residues. Positions 398–428 (SETHPSFANSNPRNMENQAHKIPGQIPEEQA) are disordered.

It belongs to the G-protein coupled receptor 1 family.

It is found in the cell membrane. This Oryzias latipes (Japanese rice fish) protein is Probable G-protein coupled receptor.